We begin with the raw amino-acid sequence, 153 residues long: MKVRVVAVGRDRSGLYAPAVDEYAKRLGRYLRFELVEVPEARKLAGTAGAKGEEGATLLAKVGPRERVVVLDERGDELTSVAFAERVRRWMERGQDVALLIGGSDGLAPEVLARADERLAVSRFTLAHRLARLVLVEQLYRAMTILRGEPYHK.

Positions 71 and 102 each coordinate S-adenosyl-L-methionine.

It belongs to the RNA methyltransferase RlmH family. As to quaternary structure, homodimer.

The protein localises to the cytoplasm. It carries out the reaction pseudouridine(1915) in 23S rRNA + S-adenosyl-L-methionine = N(3)-methylpseudouridine(1915) in 23S rRNA + S-adenosyl-L-homocysteine + H(+). Its function is as follows. Specifically methylates the pseudouridine at position 1915 (m3Psi1915) in 23S rRNA. The sequence is that of Ribosomal RNA large subunit methyltransferase H from Anaeromyxobacter dehalogenans (strain 2CP-1 / ATCC BAA-258).